Reading from the N-terminus, the 61-residue chain is Metallothionein-1A (61 aa).

Met-1 is modified (N-acetylmethionine). Positions 1-29 (MDPNCSCATGGSCTCTGSCKCKECKCTSC) are beta. 18 residues coordinate a divalent metal cation: Cys-5, Cys-7, Cys-13, Cys-15, Cys-19, Cys-21, Cys-24, Cys-26, Cys-29, Cys-33, Cys-34, Cys-36, Cys-37, Cys-41, Cys-44, Cys-48, Cys-50, and Cys-57. The alpha stretch occupies residues 30–61 (KKSCCSCCPMSCAKCAQGCICKGASEKCSCCA). Residue Ser-58 is modified to Phosphoserine. The a divalent metal cation site is built by Cys-59 and Cys-60.

The protein belongs to the metallothionein superfamily. Type 1 family. As to quaternary structure, monomer.

In terms of biological role, metallothioneins have a high content of cysteine residues that bind various heavy metals; these proteins are transcriptionally regulated by both heavy metals and glucocorticoids. This is Metallothionein-1A (MT1A) from Homo sapiens (Human).